The chain runs to 150 residues: Urease accessory protein UreE (150 aa).

This sequence belongs to the UreE family.

The protein resides in the cytoplasm. Involved in urease metallocenter assembly. Binds nickel. Probably functions as a nickel donor during metallocenter assembly. This Parasynechococcus marenigrum (strain WH8102) protein is Urease accessory protein UreE.